The chain runs to 239 residues: 7-cyano-7-deazaguanine synthase (239 aa).

13-23 contributes to the ATP binding site; that stretch reads FSGGQDSTTCL. Zn(2+)-binding residues include cysteine 192, cysteine 201, cysteine 204, and cysteine 207.

It belongs to the QueC family. It depends on Zn(2+) as a cofactor.

It catalyses the reaction 7-carboxy-7-deazaguanine + NH4(+) + ATP = 7-cyano-7-deazaguanine + ADP + phosphate + H2O + H(+). The protein operates within purine metabolism; 7-cyano-7-deazaguanine biosynthesis. In terms of biological role, catalyzes the ATP-dependent conversion of 7-carboxy-7-deazaguanine (CDG) to 7-cyano-7-deazaguanine (preQ(0)). This Shewanella sp. (strain MR-4) protein is 7-cyano-7-deazaguanine synthase.